Reading from the N-terminus, the 422-residue chain is Testin (422 aa).

One can recognise a PET domain in the interval 92–199 (MILTNPVPAK…GDVKLPSEMD (108 aa)). Disordered stretches follow at residues 135–162 (QPVA…QDPS) and 194–226 (LPSE…EDKS). The segment covering 194 to 212 (LPSEMDVKPGDRSSLDGGD) has biased composition (basic and acidic residues). 3 consecutive LIM zinc-binding domains span residues 234-297 (YSCY…CDSE), 299-359 (PRCA…NHAV), and 362-422 (QGCH…MMMS).

Belongs to the prickle / espinas / testin family. In terms of assembly, interacts via LIM domain 1 with ZYX. Interacts (via LIM domain 3) with ENAH and VASP. Interacts with ALKBH4, talin, actin, alpha-actinin, GRIP1 and PXN. Interacts (via LIM domain 2) with ACTL7A (via N-terminus). Heterodimer with ACTL7A; the heterodimer interacts with ENAH to form a heterotrimer.

The protein resides in the cytoplasm. It is found in the cell junction. The protein localises to the focal adhesion. Functionally, scaffold protein that may play a role in cell adhesion, cell spreading and in the reorganization of the actin cytoskeleton. Plays a role in the regulation of cell proliferation. May act as a tumor suppressor. The polypeptide is Testin (TES) (Monodelphis domestica (Gray short-tailed opossum)).